The sequence spans 375 residues: Terpene cyclase braA (375 aa).

Aspartate 116, asparagine 264, and serine 268 together coordinate Mg(2+). A D(D/E)XX(D/E) motif motif is present at residues 116–120 (DDEID). The NSE motif motif lies at 264–272 (NDVLSLQKE). A WxxxxxRY motif motif is present at residues 348 to 355 (WSYSCERY). 2 residues coordinate (2E,6E)-farnesyl diphosphate: arginine 354 and tyrosine 355.

This sequence belongs to the terpene synthase family. As to quaternary structure, homodimer. The cofactor is Mg(2+).

The enzyme catalyses (2E,6E)-farnesyl diphosphate + H2O = trichobrasilenol + diphosphate. It functions in the pathway secondary metabolite biosynthesis. Its function is as follows. Terpene cyclase; part of the gene cluster that mediates the biosynthesis of the brasilane terpene glycosides brasilane D and E. The biosynthesis starts with the activity of the terpene cyclase braA that converts farnesyl pyrophosphate into the sesquiterpene alcohol trichobrasilenol. Subsequently, trichobrasilenol is glycosylated by the O-glycosyltransferase braB putatively using UDP-GlcNAc as sugar donor to yield brasilane A. The latter then undergoes two rounds of oxidation performed by the cytochrome P450 monooxygenase braC. In the first round braC hydroxylates C-12 forming brasilane D, which serves as substrate in the second round to establish the epoxide at the bond between C-5 and C-10 and oxidize the alcohol at C-12 to an aldehyde leading to the final product brasilane E. The sequence is that of Terpene cyclase braA from Annulohypoxylon truncatum (Hypoxylon truncatum).